The following is a 248-amino-acid chain: Probable transcriptional regulatory protein BT_2363 (248 aa).

This sequence belongs to the TACO1 family.

It is found in the cytoplasm. The polypeptide is Probable transcriptional regulatory protein BT_2363 (Bartonella tribocorum (strain CIP 105476 / IBS 506)).